Here is a 379-residue protein sequence, read N- to C-terminus: Alcohol dehydrogenase class-2 isozyme 2 (379 aa).

Residues Cys-47, His-69, Cys-99, Cys-102, Cys-105, Cys-113, and Cys-176 each coordinate Zn(2+). NAD(+) contacts are provided by residues 205-210 (GLGGVG), Asp-229, Lys-234, 298-300 (VGV), and Arg-374.

The protein belongs to the zinc-containing alcohol dehydrogenase family. Class-II subfamily. In terms of assembly, homodimer. It depends on Zn(2+) as a cofactor.

It localises to the cytoplasm. It carries out the reaction a primary alcohol + NAD(+) = an aldehyde + NADH + H(+). The catalysed reaction is a secondary alcohol + NAD(+) = a ketone + NADH + H(+). The sequence is that of Alcohol dehydrogenase class-2 isozyme 2 (ADH2-2) from Oryctolagus cuniculus (Rabbit).